Reading from the N-terminus, the 34-residue chain is Cytochrome b6-f complex subunit 7 (34 aa).

The helical transmembrane segment at 9 to 27 (AILSFGLIFVGWGLGALLL) threads the bilayer.

It belongs to the PetM family. The 4 large subunits of the cytochrome b6-f complex are cytochrome b6, subunit IV (17 kDa polypeptide, PetD), cytochrome f and the Rieske protein, while the 4 small subunits are PetG, PetL, PetM and PetN. The complex functions as a dimer.

The protein resides in the cellular thylakoid membrane. In terms of biological role, component of the cytochrome b6-f complex, which mediates electron transfer between photosystem II (PSII) and photosystem I (PSI), cyclic electron flow around PSI, and state transitions. This is Cytochrome b6-f complex subunit 7 from Nostoc punctiforme (strain ATCC 29133 / PCC 73102).